Consider the following 117-residue polypeptide: Large ribosomal subunit protein bL19 (117 aa).

The protein belongs to the bacterial ribosomal protein bL19 family.

Its function is as follows. This protein is located at the 30S-50S ribosomal subunit interface and may play a role in the structure and function of the aminoacyl-tRNA binding site. This chain is Large ribosomal subunit protein bL19, found in Micrococcus luteus (strain ATCC 4698 / DSM 20030 / JCM 1464 / CCM 169 / CCUG 5858 / IAM 1056 / NBRC 3333 / NCIMB 9278 / NCTC 2665 / VKM Ac-2230) (Micrococcus lysodeikticus).